The chain runs to 348 residues: MSEKMVAIMKTKPGYGAELVEVDVPKPGPGEVLIKVLATSICGTDLHIYEWNEWAQSRIKPPQIMGHEVAGEVVEIGPGVEGIEVGDYVSVETHIVCGKCYACRRGQYHVCQNTKIFGVDTDGVFAEYAVVPAQNIWKNPKSIPPEYATLQEPLGNAVDTVLAGPISGKSVLITGAGPLGLLGIAVAKASGAYPVIVSEPSDFRRELAKKVGADYVINPFEEDVVKEVMDITDGNGVDVFLEFSGAPKALEQGLQAVTPAGRVSLLGLYPGKVTIDFNNLIIFKALTIYGITGRHLWETWYTVSRLLQSGKLNLDPIITHKYKGFDKYEEAFELMRAGKTGKVVFMLK.

Position 42 (C42) interacts with Zn(2+). Residues T44 and H47 each act as charge relay system in the active site. Positions 67, 68, 97, 100, 103, and 111 each coordinate Zn(2+). NAD(+) contacts are provided by residues L179, E199, R204, L266–L268, and I291–T292.

It belongs to the zinc-containing alcohol dehydrogenase family. In terms of assembly, homodimer. Homotetramer; dimer of dimers. Requires Zn(2+) as cofactor.

The protein resides in the cytoplasm. It carries out the reaction L-threonine + NAD(+) = (2S)-2-amino-3-oxobutanoate + NADH + H(+). Its pathway is amino-acid degradation; L-threonine degradation via oxydo-reductase pathway; glycine from L-threonine: step 1/2. With respect to regulation, is totally inhibited by EDTA in vitro. Functionally, catalyzes the NAD(+)-dependent oxidation of L-threonine to 2-amino-3-ketobutyrate. Is much less efficient when using NADP(+) instead of NAD(+). To a lesser extent, also catalyzes the oxidation of L-serine and DL-threo-3-phenylserine, but not that of L-allo-threonine, D-threonine and D-allo-threonine and many other L-amino acids. This Pyrococcus horikoshii (strain ATCC 700860 / DSM 12428 / JCM 9974 / NBRC 100139 / OT-3) protein is L-threonine 3-dehydrogenase.